A 469-amino-acid chain; its full sequence is MSPQTETKASVGFKAGVKDYKLTYYTPEYETLDTDILAAFRVSPQPGVPPEEAGAAVAAESSTGTWTTVWTDGLTSLDRYKGRCYHIEPVAGEENQYICYVAYPLDLFEEGSVTNMFTSIVGNVFGFKALRALRLEDLRIPVAYIKTFQGPPHGIQVERDKLNKYGRPLLGCTIKPKLGLSAKNYGRAVYEVLRGGLDFTKDDENVNSQPFMRWRDRFLFCAEALYKAQAETGEIKGHYLNATAGTCEDMMKRAVFARELGVPIVMHDYLTGGFTANTTLAHYCRDNGLLLHIHRAMHAVIDRQKNHGMHFRVLAKALRLSGGDHIHSGTVVGKLEGERDITLGFVDLLRDDYTEKDRSRGIYFTQSWVSTPGVLPVASGGIHVWHMPALTEIFGDDSVLQFGGGTLGHPWGNAPGAVANRVALEACVQARNEGRDLAREGNTIIREASKWSPELAAACEIWKEIKFEF.

A propeptide spanning residues 1-2 is cleaved from the precursor; sequence MS. At P3 the chain carries N-acetylproline. K14 is modified (N6,N6,N6-trimethyllysine). N123 and T173 together coordinate substrate. K175 functions as the Proton acceptor in the catalytic mechanism. K177 is a substrate binding site. Residues K201, D203, and E204 each coordinate Mg(2+). At K201 the chain carries N6-carboxylysine. H294 functions as the Proton acceptor in the catalytic mechanism. Positions 295, 327, and 379 each coordinate substrate.

Belongs to the RuBisCO large chain family. Type I subfamily. As to quaternary structure, heterohexadecamer of 8 large chains and 8 small chains; disulfide-linked. The disulfide link is formed within the large subunit homodimers. Requires Mg(2+) as cofactor. In terms of processing, the disulfide bond which can form in the large chain dimeric partners within the hexadecamer appears to be associated with oxidative stress and protein turnover.

The protein resides in the plastid. It is found in the chloroplast. The catalysed reaction is 2 (2R)-3-phosphoglycerate + 2 H(+) = D-ribulose 1,5-bisphosphate + CO2 + H2O. It catalyses the reaction D-ribulose 1,5-bisphosphate + O2 = 2-phosphoglycolate + (2R)-3-phosphoglycerate + 2 H(+). Functionally, ruBisCO catalyzes two reactions: the carboxylation of D-ribulose 1,5-bisphosphate, the primary event in carbon dioxide fixation, as well as the oxidative fragmentation of the pentose substrate in the photorespiration process. Both reactions occur simultaneously and in competition at the same active site. This Atriplex patula (Common orache) protein is Ribulose bisphosphate carboxylase large chain.